The primary structure comprises 334 residues: Holliday junction branch migration complex subunit RuvB (334 aa).

Positions 4–184 (ADRLIQPQIQ…FGIPLRLEFY (181 aa)) are large ATPase domain (RuvB-L). Residues Arg24, Gly65, Lys68, Thr69, Thr70, 131–133 (EDY), Arg174, Tyr184, and Arg221 each bind ATP. Position 69 (Thr69) interacts with Mg(2+). Residues 185-255 (NIKDLSTIVT…VAEHALDLLD (71 aa)) form a small ATPAse domain (RuvB-S) region. Residues 258 to 334 (SEGFDYMDRK…YQHFELIKPE (77 aa)) are head domain (RuvB-H). 3 residues coordinate DNA: Arg294, Arg313, and Arg318.

The protein belongs to the RuvB family. Homohexamer. Forms an RuvA(8)-RuvB(12)-Holliday junction (HJ) complex. HJ DNA is sandwiched between 2 RuvA tetramers; dsDNA enters through RuvA and exits via RuvB. An RuvB hexamer assembles on each DNA strand where it exits the tetramer. Each RuvB hexamer is contacted by two RuvA subunits (via domain III) on 2 adjacent RuvB subunits; this complex drives branch migration. In the full resolvosome a probable DNA-RuvA(4)-RuvB(12)-RuvC(2) complex forms which resolves the HJ.

It localises to the cytoplasm. The enzyme catalyses ATP + H2O = ADP + phosphate + H(+). Functionally, the RuvA-RuvB-RuvC complex processes Holliday junction (HJ) DNA during genetic recombination and DNA repair, while the RuvA-RuvB complex plays an important role in the rescue of blocked DNA replication forks via replication fork reversal (RFR). RuvA specifically binds to HJ cruciform DNA, conferring on it an open structure. The RuvB hexamer acts as an ATP-dependent pump, pulling dsDNA into and through the RuvAB complex. RuvB forms 2 homohexamers on either side of HJ DNA bound by 1 or 2 RuvA tetramers; 4 subunits per hexamer contact DNA at a time. Coordinated motions by a converter formed by DNA-disengaged RuvB subunits stimulates ATP hydrolysis and nucleotide exchange. Immobilization of the converter enables RuvB to convert the ATP-contained energy into a lever motion, pulling 2 nucleotides of DNA out of the RuvA tetramer per ATP hydrolyzed, thus driving DNA branch migration. The RuvB motors rotate together with the DNA substrate, which together with the progressing nucleotide cycle form the mechanistic basis for DNA recombination by continuous HJ branch migration. Branch migration allows RuvC to scan DNA until it finds its consensus sequence, where it cleaves and resolves cruciform DNA. The sequence is that of Holliday junction branch migration complex subunit RuvB from Shewanella baltica (strain OS155 / ATCC BAA-1091).